A 618-amino-acid chain; its full sequence is UvrABC system protein C (618 aa).

Residues 19 to 97 (SEPGIYRMLD…IKALRPKYNV (79 aa)) form the GIY-YIG domain. The UVR domain maps to 208-243 (QIILDALAERMKQAVNQLNFEEAAVLRDQIKNLRLI).

Belongs to the UvrC family. As to quaternary structure, interacts with UvrB in an incision complex.

It localises to the cytoplasm. Its function is as follows. The UvrABC repair system catalyzes the recognition and processing of DNA lesions. UvrC both incises the 5' and 3' sides of the lesion. The N-terminal half is responsible for the 3' incision and the C-terminal half is responsible for the 5' incision. The chain is UvrABC system protein C from Legionella pneumophila (strain Paris).